Here is a 394-residue protein sequence, read N- to C-terminus: MAKEKFERSKPHVNVGTIGHVDHGKTTLTAALTTILAKKFGGAAKAYDQIDNAPEEKARGITINTSHVEYETETRHYAHVDCPGHADYVKNMITGAAQMDGAILVCSAADGPMPQTREHILLARQVGVPYIIVFMNKCDMVDDAELFQLVEMEIRDLLSSYDFPGDDCPIVQGSALKALEGDAAYEEKIFELATALDRYIPTPERAVDKPFLLPIEDVFSISGRGTVVTGRVERGIIHVGDEIEIVGLKETQKTTCTGVEMFRKLLDEGQAGDNVGVLLRGTKREDVERGQVLAKRGTITPHTKFKAEVYVLSKEEGGPHTPFFANYRPQFYFRTTDVTGTITLEKGVEMVMPGENVTITVELIAPIAMEEGLRFAIREGGRTVGAGVVSSVIA.

The 195-residue stretch at 10–204 folds into the tr-type G domain; it reads KPHVNVGTIG…ALDRYIPTPE (195 aa). Residues 19-26 are G1; the sequence is GHVDHGKT. 19–26 serves as a coordination point for GTP; that stretch reads GHVDHGKT. Residue Thr26 coordinates Mg(2+). Residues 60–64 are G2; that stretch reads GITIN. The segment at 81-84 is G3; that stretch reads DCPG. GTP contacts are provided by residues 81 to 85 and 136 to 139; these read DCPGH and NKCD. The G4 stretch occupies residues 136 to 139; the sequence is NKCD. The interval 174–176 is G5; it reads SAL.

It belongs to the TRAFAC class translation factor GTPase superfamily. Classic translation factor GTPase family. EF-Tu/EF-1A subfamily. Monomer.

The protein resides in the cytoplasm. It carries out the reaction GTP + H2O = GDP + phosphate + H(+). GTP hydrolase that promotes the GTP-dependent binding of aminoacyl-tRNA to the A-site of ribosomes during protein biosynthesis. The protein is Elongation factor Tu of Neisseria gonorrhoeae.